A 410-amino-acid polypeptide reads, in one-letter code: Elongation factor Tu (410 aa).

Positions 10-219 (KTHVNVGTIG…ALDTYIPDPV (210 aa)) constitute a tr-type G domain. GTP contacts are provided by residues 19 to 26 (GHVDHGKT), 88 to 92 (DCPGH), and 143 to 146 (NKCD). Threonine 26 is a Mg(2+) binding site.

It belongs to the TRAFAC class translation factor GTPase superfamily. Classic translation factor GTPase family. EF-Tu/EF-1A subfamily. As to quaternary structure, monomer.

It localises to the cytoplasm. It catalyses the reaction GTP + H2O = GDP + phosphate + H(+). Its function is as follows. GTP hydrolase that promotes the GTP-dependent binding of aminoacyl-tRNA to the A-site of ribosomes during protein biosynthesis. This Brachyspira hyodysenteriae (Treponema hyodysenteriae) protein is Elongation factor Tu.